Reading from the N-terminus, the 227-residue chain is Ion-translocating oxidoreductase complex subunit E (227 aa).

The next 6 helical transmembrane spans lie at Ala18 to Ala38, Leu39 to Val59, Ile69 to Ala89, Gly93 to Gly113, Leu125 to Leu145, and His182 to Leu202.

This sequence belongs to the NqrDE/RnfAE family. As to quaternary structure, the complex is composed of six subunits: RnfA, RnfB, RnfC, RnfD, RnfE and RnfG.

The protein resides in the cell inner membrane. Its function is as follows. Part of a membrane-bound complex that couples electron transfer with translocation of ions across the membrane. This is Ion-translocating oxidoreductase complex subunit E from Aliivibrio fischeri (strain ATCC 700601 / ES114) (Vibrio fischeri).